A 298-amino-acid chain; its full sequence is Lipoyl synthase (298 aa).

[4Fe-4S] cluster is bound by residues Cys40, Cys45, Cys51, Cys67, Cys71, Cys74, and Ser280. Residues 53-269 enclose the Radical SAM core domain; the sequence is AVRRTATFMI…KEIALSKGFT (217 aa).

Belongs to the radical SAM superfamily. Lipoyl synthase family. [4Fe-4S] cluster is required as a cofactor.

Its subcellular location is the cytoplasm. It carries out the reaction [[Fe-S] cluster scaffold protein carrying a second [4Fe-4S](2+) cluster] + N(6)-octanoyl-L-lysyl-[protein] + 2 oxidized [2Fe-2S]-[ferredoxin] + 2 S-adenosyl-L-methionine + 4 H(+) = [[Fe-S] cluster scaffold protein] + N(6)-[(R)-dihydrolipoyl]-L-lysyl-[protein] + 4 Fe(3+) + 2 hydrogen sulfide + 2 5'-deoxyadenosine + 2 L-methionine + 2 reduced [2Fe-2S]-[ferredoxin]. It functions in the pathway protein modification; protein lipoylation via endogenous pathway; protein N(6)-(lipoyl)lysine from octanoyl-[acyl-carrier-protein]. Its function is as follows. Catalyzes the radical-mediated insertion of two sulfur atoms into the C-6 and C-8 positions of the octanoyl moiety bound to the lipoyl domains of lipoate-dependent enzymes, thereby converting the octanoylated domains into lipoylated derivatives. This Geobacillus sp. (strain WCH70) protein is Lipoyl synthase.